A 306-amino-acid polypeptide reads, in one-letter code: ORF-B protein (306 aa).

Transmembrane regions (helical) follow at residues 92-112, 120-140, and 161-181; these read MIQWDYVFYLLPRVWIMFPFI, LTHLLTLTTSVLSATSLVFGW, and VIEWLAQFSFLFTHVTLIVVS.

In terms of assembly, interacts with host RACK1.

It is found in the host cytoplasm. It localises to the host cell membrane. This Sander vitreus (Walleye) protein is ORF-B protein.